A 519-amino-acid chain; its full sequence is MDYENKILQKYNLCNRCYGRIYAKLMRMGNKDRGTSIKTVIAMNFEEKLKDLIEEKNNLIDIISNSQDINENEEIDENTKNNEDTENKADDKSQSNEEKIQEIDEKINIIKENLTLLRKTGLNGIKNEYIIEELLKDDITREENESEENESNIFLTPEQKCPWCKDVFNIQNLEEIADKIVEALSEYEFDRFLIGTRLPKRIKELEKDLETTFNEKNTESLRNEFGRELGKILTKKLEKPVDKETPDIVVMVNPYNQKIYLQINPIFIKGRYRKTKRGIPQSHWDCRSCRGKGCEKCNFTGKQYPTSVEEIIAEPVMNIAKGSGEALHAAGREDIDVKMLGKGRPFVIEVKEPKVRKMDLLKIMDEINKIEGVEVSDLEYGVKNDVRFFKNEPHTKTYCALVSIVDEELENHDFENDKIVELSEKLENLRIDQRTPHRVSHRRADLVRVRNIYKAWCEPIDEKSFKLTVYCDGGLYIKELISGDEGRTKPSISEILDIPCYCKLLTVMEVHDENNPANY.

The interval 70–98 (NENEEIDENTKNNEDTENKADDKSQSNEE) is disordered. Residues 77 to 98 (ENTKNNEDTENKADDKSQSNEE) show a composition bias toward basic and acidic residues. A THUMP domain is found at 144-265 (NESEENESNI…NQKIYLQINP (122 aa)). The active-site Nucleophile is Asp334. The substrate site is built by Tyr398 and Tyr476.

Belongs to the pseudouridine synthase Pus10 family.

It catalyses the reaction uridine(54) in tRNA = pseudouridine(54) in tRNA. The catalysed reaction is uridine(55) in tRNA = pseudouridine(55) in tRNA. Its function is as follows. Responsible for synthesis of pseudouridine from uracil-54 and uracil-55 in the psi GC loop of transfer RNAs. The protein is tRNA pseudouridine synthase Pus10 of Methanococcus voltae (strain ATCC BAA-1334 / A3).